A 147-amino-acid chain; its full sequence is Small ribosomal subunit protein eS19 (147 aa).

The protein belongs to the eukaryotic ribosomal protein eS19 family. As to quaternary structure, part of the 30S ribosomal subunit.

In terms of biological role, may be involved in maturation of the 30S ribosomal subunit. This is Small ribosomal subunit protein eS19 from Archaeoglobus fulgidus (strain ATCC 49558 / DSM 4304 / JCM 9628 / NBRC 100126 / VC-16).